The primary structure comprises 593 residues: Methionine--tRNA ligase (593 aa).

Positions 7–17 (PYANGPRHIGH) match the 'HIGH' region motif. Zn(2+) contacts are provided by C139, C142, C152, and C155. Residues 343–347 (KFSTS) carry the 'KMSKS' region motif. T346 contacts ATP.

It belongs to the class-I aminoacyl-tRNA synthetase family. MetG type 1 subfamily. As to quaternary structure, monomer. Requires Zn(2+) as cofactor.

It localises to the cytoplasm. It carries out the reaction tRNA(Met) + L-methionine + ATP = L-methionyl-tRNA(Met) + AMP + diphosphate. In terms of biological role, is required not only for elongation of protein synthesis but also for the initiation of all mRNA translation through initiator tRNA(fMet) aminoacylation. The chain is Methionine--tRNA ligase from Saccharopolyspora erythraea (strain ATCC 11635 / DSM 40517 / JCM 4748 / NBRC 13426 / NCIMB 8594 / NRRL 2338).